The chain runs to 121 residues: MVYNCGTRLERRKKRVRLKLKRNSSLLRLSIFKSNRHFYVQLIDDKCGRTFASASTLEREVVALTNRRVNSDSVKIVAKLMSDRLNKLDNCKKFIFDRGLYKYTGIVSEFANELRSYGFEF.

This sequence belongs to the universal ribosomal protein uL18 family. In terms of assembly, part of the 50S ribosomal subunit; part of the 5S rRNA/L5/L18/L25 subcomplex. Contacts the 5S and 23S rRNAs.

This is one of the proteins that bind and probably mediate the attachment of the 5S RNA into the large ribosomal subunit, where it forms part of the central protuberance. This is Large ribosomal subunit protein uL18 from Ehrlichia chaffeensis (strain ATCC CRL-10679 / Arkansas).